Here is a 321-residue protein sequence, read N- to C-terminus: Calcium-regulated beta-propeller protein CarP (321 aa).

A signal peptide spans M1–R42.

The protein belongs to the YjiK family.

Its subcellular location is the cell inner membrane. In terms of biological role, plays a role in intracellular Ca(2+) homeostasis. Involved in modulating Ca(2+)-induced swarming motility and pyocyanine production. Plays a role in regulating virulence in a Ca(2+)-dependent manner. Involved in cell protection against oxidative stress in the presence of elevated Ca(2+). This is Calcium-regulated beta-propeller protein CarP from Pseudomonas aeruginosa (strain ATCC 15692 / DSM 22644 / CIP 104116 / JCM 14847 / LMG 12228 / 1C / PRS 101 / PAO1).